A 68-amino-acid polypeptide reads, in one-letter code: Large ribosomal subunit protein bL35 (68 aa).

Basic residues-rich tracts occupy residues 1-11 (MPKLKTRSSAK) and 19-29 (SGKVKHGKAFA). Residues 1-54 (MPKLKTRSSAKKRFDVKKSGKVKHGKAFAKHLFTFSKTPKSKRSNRGTGHLRDM) form a disordered region.

This sequence belongs to the bacterial ribosomal protein bL35 family.

This Myxococcus xanthus (strain DK1622) protein is Large ribosomal subunit protein bL35.